Reading from the N-terminus, the 157-residue chain is SsrA-binding protein (157 aa).

It belongs to the SmpB family.

It localises to the cytoplasm. Functionally, required for rescue of stalled ribosomes mediated by trans-translation. Binds to transfer-messenger RNA (tmRNA), required for stable association of tmRNA with ribosomes. tmRNA and SmpB together mimic tRNA shape, replacing the anticodon stem-loop with SmpB. tmRNA is encoded by the ssrA gene; the 2 termini fold to resemble tRNA(Ala) and it encodes a 'tag peptide', a short internal open reading frame. During trans-translation Ala-aminoacylated tmRNA acts like a tRNA, entering the A-site of stalled ribosomes, displacing the stalled mRNA. The ribosome then switches to translate the ORF on the tmRNA; the nascent peptide is terminated with the 'tag peptide' encoded by the tmRNA and targeted for degradation. The ribosome is freed to recommence translation, which seems to be the essential function of trans-translation. The chain is SsrA-binding protein from Aquifex aeolicus (strain VF5).